We begin with the raw amino-acid sequence, 432 residues long: Polyadenylate-binding protein RBP47C (432 aa).

Residues 1 to 55 are disordered; that stretch reads MADVKIQSESESSDSHPVVDNQPPPPPPPPQQPAKEEENQPKTSPTPPPHWMRYP. Residues 22-32 show a composition bias toward pro residues; it reads QPPPPPPPPQQ. RRM domains are found at residues 101-183 and 197-276; these read KTIW…WASF and LSIF…PATP. The segment at 271–293 is disordered; sequence IGPATPRKTNGYQQQGGYMPNGT. Residues 277 to 286 show a composition bias toward polar residues; that stretch reads RKTNGYQQQG. The 73-residue stretch at 304 to 376 folds into the RRM 3 domain; sequence TTIFVGGLDS…QTVRLSWGRN (73 aa).

This sequence belongs to the polyadenylate-binding RBP47 family. In terms of assembly, interacts with the poly(A) tail of mRNA in nucleus. As to expression, expressed in leaves, stems, flowers, and seedlings.

It localises to the nucleus. The protein localises to the cytoplasmic granule. Its function is as follows. Heterogeneous nuclear ribonucleoprotein (hnRNP)-protein binding the poly(A) tail of mRNA and probably involved in some steps of pre-mRNA maturation. The protein is Polyadenylate-binding protein RBP47C (RBP47C) of Arabidopsis thaliana (Mouse-ear cress).